A 569-amino-acid polypeptide reads, in one-letter code: Proline--tRNA ligase (569 aa).

Belongs to the class-II aminoacyl-tRNA synthetase family. ProS type 1 subfamily. As to quaternary structure, homodimer.

Its subcellular location is the cytoplasm. It carries out the reaction tRNA(Pro) + L-proline + ATP = L-prolyl-tRNA(Pro) + AMP + diphosphate. Functionally, catalyzes the attachment of proline to tRNA(Pro) in a two-step reaction: proline is first activated by ATP to form Pro-AMP and then transferred to the acceptor end of tRNA(Pro). As ProRS can inadvertently accommodate and process non-cognate amino acids such as alanine and cysteine, to avoid such errors it has two additional distinct editing activities against alanine. One activity is designated as 'pretransfer' editing and involves the tRNA(Pro)-independent hydrolysis of activated Ala-AMP. The other activity is designated 'posttransfer' editing and involves deacylation of mischarged Ala-tRNA(Pro). The misacylated Cys-tRNA(Pro) is not edited by ProRS. This chain is Proline--tRNA ligase, found in Dehalococcoides mccartyi (strain CBDB1).